We begin with the raw amino-acid sequence, 498 residues long: RuvB-like helicase 2 (498 aa).

Residue 79 to 86 (GPPSTGKT) participates in ATP binding. Residues 458–498 (VTIGQESTDGSTQPQAKQQEVAQPEATQPQSQPEDDKMETD) form a disordered region. The segment covering 461-489 (GQESTDGSTQPQAKQQEVAQPEATQPQSQ) has biased composition (polar residues).

Belongs to the RuvB family. As to quaternary structure, may form heterododecamers with RVB1. Component of the SWR1 chromatin remodeling complex, the INO80 chromatin remodeling complex, and of the R2TP complex.

Its subcellular location is the nucleus. The enzyme catalyses ATP + H2O = ADP + phosphate + H(+). In terms of biological role, DNA helicase which participates in several chromatin remodeling complexes, including the SWR1 and the INO80 complexes. The SWR1 complex mediates the ATP-dependent exchange of histone H2A for the H2A variant HZT1 leading to transcriptional regulation of selected genes by chromatin remodeling. The INO80 complex remodels chromatin by shifting nucleosomes and is involved in DNA repair. Also involved in pre-rRNA processing. The protein is RuvB-like helicase 2 (RVB2) of Candida albicans (strain SC5314 / ATCC MYA-2876) (Yeast).